Here is a 291-residue protein sequence, read N- to C-terminus: MSGPFPAEPTKGPLAMQPAPKVNLKRTSSLVGPTQSFFMRESKALGAVQIMNGLFHITLGGLLMIPTGVFAPICLSVWYPLWGGIMYIISGSLLAAAAEKTSRKSLVKAKVIMSSLSLFAAISGIILSIMDILNMTLSHFLKMRRLELIQTSKPYVDIYDCEPSNSSEKNSPSTQYCNSIQSVFLGILSAMLISAFFQKLVTAGIVENEWKRMCTRSKSNVVLLSAGEKNEQTIKMKEEIIELSGVSSQPKNEEEIEIIPVQEEEEEEAEINFPAPPQEQESLPVENEIAP.

Over 1 to 44 the chain is Cytoplasmic; the sequence is MSGPFPAEPTKGPLAMQPAPKVNLKRTSSLVGPTQSFFMRESKA. At Ser-29 the chain carries Phosphoserine. The helical transmembrane segment at 45-65 threads the bilayer; that stretch reads LGAVQIMNGLFHITLGGLLMI. Topologically, residues 66–68 are extracellular; the sequence is PTG. The helical transmembrane segment at 69–89 threads the bilayer; sequence VFAPICLSVWYPLWGGIMYII. Over 90 to 111 the chain is Cytoplasmic; it reads SGSLLAAAAEKTSRKSLVKAKV. A helical membrane pass occupies residues 112–132; sequence IMSSLSLFAAISGIILSIMDI. The Extracellular segment spans residues 133–182; that stretch reads LNMTLSHFLKMRRLELIQTSKPYVDIYDCEPSNSSEKNSPSTQYCNSIQS. A helical membrane pass occupies residues 183–203; the sequence is VFLGILSAMLISAFFQKLVTA. The Cytoplasmic segment spans residues 204–291; the sequence is GIVENEWKRM…SLPVENEIAP (88 aa). Residue Cys-214 is the site of S-palmitoyl cysteine attachment. Ser-219 is modified (phosphoserine). Thr-233 carries the post-translational modification Phosphothreonine. The span at 261–270 shows a compositional bias: acidic residues; it reads VQEEEEEEAE. Positions 261–291 are disordered; the sequence is VQEEEEEEAEINFPAPPQEQESLPVENEIAP.

This sequence belongs to the MS4A family. In terms of assembly, forms homotetramers. Interacts with the heavy and light chains of cell surface IgM, the antigen-binding components of the BCR. Phosphorylated.

The protein localises to the cell membrane. Functionally, B-lymphocyte-specific membrane protein that plays a role in the regulation of cellular calcium influx necessary for the development, differentiation, and activation of B-lymphocytes. Functions as a store-operated calcium (SOC) channel component promoting calcium influx after activation by the B-cell receptor/BCR. This chain is B-lymphocyte antigen CD20 (Ms4a1), found in Mus musculus (Mouse).